The following is a 389-amino-acid chain: Probable inactive purple acid phosphatase 29 (389 aa).

The first 34 residues, 1–34 (MADNRRRRSLFDFLLFSVFLGLACLCLSPIPATA), serve as a signal peptide directing secretion. Asn-80 is a glycosylation site (N-linked (GlcNAc...) asparagine). Asn-136 is a substrate binding site. Asn-136 lines the Zn(2+) pocket. N-linked (GlcNAc...) asparagine glycosylation is found at Asn-191 and Asn-267. His-303 serves as a coordination point for Zn(2+). 303-305 (HDH) is a substrate binding site. His-305 contacts Fe cation. Asn-380 is a glycosylation site (N-linked (GlcNAc...) asparagine).

Belongs to the metallophosphoesterase superfamily. Purple acid phosphatase family. As to quaternary structure, homodimer. The cofactor is Fe cation. Zn(2+) is required as a cofactor. As to expression, expressed in roots, stems, leaves, flowers and siliques.

The protein resides in the secreted. This Arabidopsis thaliana (Mouse-ear cress) protein is Probable inactive purple acid phosphatase 29 (PAP29).